The primary structure comprises 314 residues: UPF0761 membrane protein VP0125 (314 aa).

6 helical membrane-spanning segments follow: residues 41 to 61 (YLAY…LSIL), 104 to 124 (MSAV…SNID), 139 to 159 (LVFS…LVGA), 185 to 205 (FLRW…YILV), 217 to 237 (VGAA…ALYI), and 249 to 269 (ALAA…IVLL). The interval 295–314 (ESQLANEGSESSDSANSTSQ) is disordered.

It belongs to the UPF0761 family.

The protein localises to the cell inner membrane. The protein is UPF0761 membrane protein VP0125 of Vibrio parahaemolyticus serotype O3:K6 (strain RIMD 2210633).